A 1907-amino-acid polypeptide reads, in one-letter code: Chromatin modification-related protein EAF1 B (1907 aa).

Disordered stretches follow at residues 108-208 (ASPH…TDLV), 261-287 (NRVSSNSLNTKVDGEPVVRESTAGSKT), 323-373 (GGSP…SHAN), and 449-469 (NQSHRSTAEMQTKEKSSETEK). Basic and acidic residues predominate over residues 140–151 (SENKSVEGERNL). Polar residues-rich tracts occupy residues 261–270 (NRVSSNSLNT), 333–342 (GQKNSSTQLN), and 355–372 (TNRGATGTNGLESESSHA). Residues 563–641 (CGTAPVEVRE…LSYAILQFWS (79 aa)) form the HSA domain. Disordered stretches follow at residues 836 to 909 (SSSL…AVQK) and 928 to 952 (AETSGKPKKKKKTHQGSAYDQTWHL). Basic residues predominate over residues 856-866 (RRVRTASRHRV). Polar residues-rich tracts occupy residues 884–898 (TDASSGDTSSFQDEY) and 942–952 (QGSAYDQTWHL). Residues 1049 to 1105 (SGNPWSLFEDQALVVLVHDMGPNWELISDAMNSTLKIKYIYRNPTECKDRHKILMDK) form the SANT domain. Disordered stretches follow at residues 1107-1131 (AGDGADSAEDSGNSQSYPSTLPGIP), 1235-1266 (PVLPTSGAHPSTPGSSGVVLSNNLPTTSGLQS), 1296-1319 (LSGRNLQQPSLSTPAAVSGSDRGH), 1429-1465 (GHLSQQHQMSPQSHVLGNSHHPHLQSPSQATGAQQEA), 1477-1594 (YLQQ…QQLN), 1638-1703 (VRPD…SPAT), 1767-1791 (VPQSVTNTTQTASMGTTKGMPQASN), and 1824-1907 (VNNS…TKVE). Polar residues-rich tracts occupy residues 1116–1125 (DSGNSQSYPS), 1242–1266 (AHPSTPGSSGVVLSNNLPTTSGLQS), 1296–1310 (LSGRNLQQPSLSTPA), 1431–1444 (LSQQHQMSPQSHVL), and 1453–1462 (QSPSQATGAQ). Positions 1493–1512 (PHVQQPQGSSVSSSSQNSPQ) are enriched in low complexity. Residues 1513–1529 (TQPPVSPQPLSMPPVSP) are compositionally biased toward pro residues. 8 stretches are compositionally biased toward polar residues: residues 1532-1545 (NINAMAQQKPQKSQ), 1554-1568 (SPQSGTSGVNNQAGK), 1585-1594 (RQPTQGQQLN), 1640-1655 (PDQQSSVGTTTSTDLQ), 1662-1672 (PLSSNHSQQLP), 1681-1703 (PSPQQQMQLHSDNSIQGQSSPAT), 1769-1782 (QSVTNTTQTASMGT), and 1824-1844 (VNNSNTDSAGNDPVSTPNQGL). 2 stretches are compositionally biased toward basic and acidic residues: residues 1863-1872 (SEEKRPKLPE) and 1882-1892 (LASEEQPHLEE).

This sequence belongs to the EAF1 family. Component of the NuA4 histone acetyltransferase complex. Interacts with ARP4 and SWC4, and (via HSA domain) with TAF14 and TAF14B. Expressed in leaves.

The protein localises to the nucleus. Component of the NuA4 histone acetyltransferase complex which is involved in transcriptional activation of selected genes principally by acetylation of nucleosomal histone H4 and H2A. This chain is Chromatin modification-related protein EAF1 B (EAF1B), found in Arabidopsis thaliana (Mouse-ear cress).